The primary structure comprises 160 residues: Eukaryotic translation initiation factor 5A-3 (160 aa).

Positions 1–12 (MSDEEHHFESKA) are enriched in basic and acidic residues. Residues 1–21 (MSDEEHHFESKADAGASKTYP) form a disordered region. Position 52 is a hypusine (Lys-52).

This sequence belongs to the eIF-5A family. Post-translationally, lys-52 undergoes hypusination, a unique post-translational modification that consists in the addition of a butylamino group from spermidine to lysine side chain, leading to the formation of the unusual amino acid hypusine. eIF-5As are the only known proteins to undergo this modification, which is essential for their function.

Translation factor that promotes translation elongation and termination, particularly upon ribosome stalling at specific amino acid sequence contexts. Binds between the exit (E) and peptidyl (P) site of the ribosome and promotes rescue of stalled ribosome: specifically required for efficient translation of polyproline-containing peptides as well as other motifs that stall the ribosome. Acts as a ribosome quality control (RQC) cofactor by joining the RQC complex to facilitate peptidyl transfer during CAT tailing step. This chain is Eukaryotic translation initiation factor 5A-3 (EIF5A3), found in Solanum tuberosum (Potato).